Consider the following 183-residue polypeptide: Translation initiation factor IF-3 (183 aa).

The protein belongs to the IF-3 family. As to quaternary structure, monomer.

Its subcellular location is the cytoplasm. Its function is as follows. IF-3 binds to the 30S ribosomal subunit and shifts the equilibrium between 70S ribosomes and their 50S and 30S subunits in favor of the free subunits, thus enhancing the availability of 30S subunits on which protein synthesis initiation begins. The sequence is that of Translation initiation factor IF-3 from Pseudomonas putida (strain ATCC 700007 / DSM 6899 / JCM 31910 / BCRC 17059 / LMG 24140 / F1).